The primary structure comprises 381 residues: Chorismate synthase (381 aa).

Residues Arg41 and Arg47 each coordinate NADP(+). Residues 127-129, 247-248, Gly291, 306-310, and Arg332 each bind FMN; these read RAS, QA, and KPIPT.

Belongs to the chorismate synthase family. Homotetramer. Requires FMNH2 as cofactor.

The enzyme catalyses 5-O-(1-carboxyvinyl)-3-phosphoshikimate = chorismate + phosphate. The protein operates within metabolic intermediate biosynthesis; chorismate biosynthesis; chorismate from D-erythrose 4-phosphate and phosphoenolpyruvate: step 7/7. In terms of biological role, catalyzes the anti-1,4-elimination of the C-3 phosphate and the C-6 proR hydrogen from 5-enolpyruvylshikimate-3-phosphate (EPSP) to yield chorismate, which is the branch point compound that serves as the starting substrate for the three terminal pathways of aromatic amino acid biosynthesis. This reaction introduces a second double bond into the aromatic ring system. The sequence is that of Chorismate synthase from Anaeromyxobacter dehalogenans (strain 2CP-1 / ATCC BAA-258).